A 289-amino-acid chain; its full sequence is Phosphatidylglycerol--prolipoprotein diacylglyceryl transferase (289 aa).

7 helical membrane-spanning segments follow: residues Ala-23–Val-43, Leu-61–Tyr-81, Gly-99–His-119, Phe-125–Leu-145, Ser-199–Ile-219, Gly-226–Phe-246, and Leu-259–Val-279. Arg-144 is a binding site for a 1,2-diacyl-sn-glycero-3-phospho-(1'-sn-glycerol).

Belongs to the Lgt family.

It is found in the cell inner membrane. The catalysed reaction is L-cysteinyl-[prolipoprotein] + a 1,2-diacyl-sn-glycero-3-phospho-(1'-sn-glycerol) = an S-1,2-diacyl-sn-glyceryl-L-cysteinyl-[prolipoprotein] + sn-glycerol 1-phosphate + H(+). It participates in protein modification; lipoprotein biosynthesis (diacylglyceryl transfer). In terms of biological role, catalyzes the transfer of the diacylglyceryl group from phosphatidylglycerol to the sulfhydryl group of the N-terminal cysteine of a prolipoprotein, the first step in the formation of mature lipoproteins. In Pectobacterium atrosepticum (strain SCRI 1043 / ATCC BAA-672) (Erwinia carotovora subsp. atroseptica), this protein is Phosphatidylglycerol--prolipoprotein diacylglyceryl transferase.